We begin with the raw amino-acid sequence, 370 residues long: Probable phosphoserine aminotransferase (370 aa).

Residue Arg45 coordinates L-glutamate. Pyridoxal 5'-phosphate-binding positions include Gly79–Thr80, Trp105, Thr154, Asp175, and Gln198. Lys199 is subject to N6-(pyridoxal phosphate)lysine. Asn240–Thr241 lines the pyridoxal 5'-phosphate pocket.

This sequence belongs to the class-V pyridoxal-phosphate-dependent aminotransferase family. SerC subfamily. In terms of assembly, homodimer. Pyridoxal 5'-phosphate serves as cofactor.

The enzyme catalyses O-phospho-L-serine + 2-oxoglutarate = 3-phosphooxypyruvate + L-glutamate. The catalysed reaction is 4-(phosphooxy)-L-threonine + 2-oxoglutarate = (R)-3-hydroxy-2-oxo-4-phosphooxybutanoate + L-glutamate. Its pathway is amino-acid biosynthesis; L-serine biosynthesis; L-serine from 3-phospho-D-glycerate: step 2/3. It participates in cofactor biosynthesis; pyridoxine 5'-phosphate biosynthesis; pyridoxine 5'-phosphate from D-erythrose 4-phosphate: step 3/5. In terms of biological role, catalyzes the reversible conversion of 3-phosphohydroxypyruvate to phosphoserine and of 3-hydroxy-2-oxo-4-phosphonooxybutanoate to phosphohydroxythreonine. In Caenorhabditis elegans, this protein is Probable phosphoserine aminotransferase.